Reading from the N-terminus, the 232-residue chain is Cilia- and flagella-associated protein 95 (232 aa).

Over 1 to 96 (MDSSDSSCQE…PVWISETREK (96 aa)) the chain is Extracellular. Asn75 carries N-linked (GlcNAc...) asparagine glycosylation. A helical transmembrane segment spans residues 97–115 (MAQVCLNTKLAKIKSKALL). The Cytoplasmic portion of the chain corresponds to 116-232 (NEETMNSGII…TGGPIAPFLK (117 aa)). The tract at residues 153–163 (LTTYAEEYAPP) is mn.

Microtubule inner protein component of sperm flagellar doublet microtubules. Interacts with MYH9. Interacts with MYH10. Expressed in trachea multiciliated cells.

It localises to the cytoplasm. Its subcellular location is the cytoskeleton. It is found in the cilium axoneme. The protein localises to the flagellum axoneme. The protein resides in the cell membrane. Its function is as follows. Microtubule inner protein (MIP) part of the dynein-decorated doublet microtubules (DMTs) in cilia axoneme, which is required for motile cilia beating. This Bos taurus (Bovine) protein is Cilia- and flagella-associated protein 95.